The chain runs to 555 residues: Solute carrier family 22 member 2 (555 aa).

Residues 1 to 21 (MSTVDDILEHIGEFHLFQKQT) are Cytoplasmic-facing. A helical transmembrane segment spans residues 22-42 (FFLLALLSGAFTPIYVGIVFL). Over 43-150 (GFTPDHHCWS…LVCAHSWMLD (108 aa)) the chain is Extracellular. A glycan (N-linked (GlcNAc...) asparagine) is linked at N71. A helical membrane pass occupies residues 151–171 (LFQSVVNVGFFIGAMMIGYLA). At 172 to 177 (DRFGRK) the chain is on the cytoplasmic side. The chain crosses the membrane as a helical span at residues 178–198 (FCLLVTILINAISGALMAISP). Residues 199 to 210 (NYAWMLVFRFLQ) are Extracellular-facing. The chain crosses the membrane as a helical span at residues 211–231 (GLVSKAGWLIGYILITEFVGL). Residues 232–238 (GYRRMVG) are Cytoplasmic-facing. Residues 239 to 259 (ICYQIAFTVGLLILAGVAYVI) form a helical membrane-spanning segment. Residues 260 to 263 (PNWR) are Extracellular-facing. The helical transmembrane segment at 264–284 (WLQFAVTLPNFCFLLYFWCIP) threads the bilayer. The Proline-rich sequence motif lies at 284–288 (PESPR). The Cytoplasmic portion of the chain corresponds to 285-348 (ESPRWLISQN…VRTPQIRKHT (64 aa)). Residues 349 to 369 (LILMYNWFTSSVLYQGLIMHM) traverse the membrane as a helical segment. The Extracellular portion of the chain corresponds to 370-375 (GLAGDN). Residues 376-396 (IYLDFFYSALVEFPAAFIIIL) traverse the membrane as a helical segment. The Cytoplasmic segment spans residues 397-404 (TIDRVGRR). The chain crosses the membrane as a helical span at residues 405–425 (YPWAVSNMVAGAACLASVFIP). The Extracellular segment spans residues 426–432 (DDLQWLK). A helical transmembrane segment spans residues 433–453 (ITIACLGRMGITMAYEMVCLV). Topologically, residues 454-464 (NAELYPTYIRN) are cytoplasmic. The chain crosses the membrane as a helical span at residues 465–485 (LGVLVCSSMCDIGGIITPFLV). Over 486-494 (YRLTDIWME) the chain is Extracellular. Residues 495–515 (FPLVVFAVVGLVAGALVLLLP) form a helical membrane-spanning segment. Residues 516–555 (ETKGKALPETIEDAENMQRPRKKKEKRIYLQVKQADRPLS) lie on the Cytoplasmic side of the membrane.

It belongs to the major facilitator (TC 2.A.1) superfamily. Organic cation transporter (TC 2.A.1.19) family. Tyrosine phosphorylated. Expressed in the kidney, in the proximal tubules of cortex and of the outer medulla. In brain, highly expressed predominantly in regions located at the brain-cerebrospinal fluid border, in the leptomeninges, in the choroid plexus and in a layer boarding the third ventricle. In brain, also observed in the granular cell layer of the cerebellum and in the granular layer and pyramidal cells of the hippocampus in the CA1-CA3 regions. Expressed in tracheal and bronchial ciliated epithelium in the respiratory tract. Expression is greater in the kidney of male than of female.

The protein localises to the basolateral cell membrane. It localises to the basal cell membrane. It is found in the apical cell membrane. The catalysed reaction is (R)-noradrenaline(out) = (R)-noradrenaline(in). It carries out the reaction (R)-adrenaline(out) = (R)-adrenaline(in). The enzyme catalyses serotonin(out) = serotonin(in). It catalyses the reaction dopamine(out) = dopamine(in). The catalysed reaction is histamine(out) = histamine(in). It carries out the reaction thiamine(in) = thiamine(out). The enzyme catalyses creatinine(in) = creatinine(out). It catalyses the reaction 1-methylnicotinamide(out) = 1-methylnicotinamide(in). The catalysed reaction is guanidine(out) = guanidine(in). It carries out the reaction choline(out) = choline(in). The enzyme catalyses agmatine(out) = agmatine(in). It catalyses the reaction putrescine(out) = putrescine(in). The catalysed reaction is spermidine(in) = spermidine(out). It carries out the reaction tyramine(in) = tyramine(out). The enzyme catalyses L-histidyl-L-proline diketopiperazine(in) = L-histidyl-L-proline diketopiperazine(out). It catalyses the reaction (R)-salsolinol(in) = (R)-salsolinol(out). The catalysed reaction is N-methyl-(R)-salsolinol(in) = N-methyl-(R)-salsolinol(out). It carries out the reaction acetylcholine(in) = acetylcholine(out). The enzyme catalyses prostaglandin F2alpha(out) = prostaglandin F2alpha(in). It catalyses the reaction prostaglandin E2(out) = prostaglandin E2(in). With respect to regulation, tyrosine phosphorylation of the transporter leads to activation of the transport activity. Inhibited by cGMP, most likely through a cGMP-binding protein that interacts with OCT2. In terms of biological role, electrogenic voltage-dependent transporter that mediates the transport of a variety of organic cations such as endogenous bioactive amines, cationic drugs and xenobiotics. Functions as a Na(+)-independent, bidirectional uniporter. Cation cellular uptake or release is driven by the electrochemical potential, i.e. membrane potential and concentration gradient. However, may also engage electroneutral cation exchange when saturating concentrations of cation substrates are reached. Predominantly expressed at the basolateral membrane of hepatocytes and proximal tubules and involved in the uptake and disposition of cationic compounds by hepatic and renal clearance from the blood flow. Implicated in monoamine neurotransmitters uptake such as histamine, dopamine, adrenaline/epinephrine, noradrenaline/norepinephrine, serotonin and tyramine, thereby supporting a physiological role in the central nervous system by regulating interstitial concentrations of neurotransmitters. Also capable of transporting dopaminergic neuromodulators cyclo(his-pro), salsolinol and N-methyl-salsolinol, thereby involved in the maintenance of dopaminergic cell integrity in the central nervous system. Mediates the bidirectional transport of acetylcholine (ACh) at the apical membrane of ciliated cell in airway epithelium, thereby playing a role in luminal release of ACh from bronchial epithelium. Also transports guanidine and endogenous monoamines such as vitamin B1/thiamine, creatinine and N-1-methylnicotinamide (NMN). Mediates the uptake and efflux of quaternary ammonium compound choline. Mediates the bidirectional transport of polyamine agmatine and the uptake of polyamine putrescine. Able to transport non-amine endogenous compounds such as prostaglandin E2 (PGE2) and prostaglandin F2-alpha (PGF2-alpha). Also involved in the uptake of xenobiotic 4-(4-(dimethylamino)styryl)-N-methylpyridinium (ASP). May contribute to regulate the transport of organic compounds in testis across the blood-testis-barrier. The protein is Solute carrier family 22 member 2 of Rattus norvegicus (Rat).